The primary structure comprises 88 residues: Small ribosomal subunit protein uS15c (88 aa).

It belongs to the universal ribosomal protein uS15 family. In terms of assembly, part of the 30S ribosomal subunit.

The protein resides in the plastid. It is found in the chloroplast. The polypeptide is Small ribosomal subunit protein uS15c (rps15) (Arabidopsis thaliana (Mouse-ear cress)).